We begin with the raw amino-acid sequence, 427 residues long: Serine hydroxymethyltransferase (427 aa).

A (6S)-5,6,7,8-tetrahydrofolate-binding site is contributed by 122 to 124 (GHI). The residue at position 228 (Lys228) is an N6-(pyridoxal phosphate)lysine.

Belongs to the SHMT family. Homodimer. Requires pyridoxal 5'-phosphate as cofactor.

The protein localises to the cytoplasm. Its pathway is amino-acid biosynthesis; glycine biosynthesis; glycine from L-serine: step 1/1. In terms of biological role, catalyzes the reversible interconversion of serine and glycine with a modified folate serving as the one-carbon carrier. Also exhibits a pteridine-independent aldolase activity toward beta-hydroxyamino acids, producing glycine and aldehydes, via a retro-aldol mechanism. This is Serine hydroxymethyltransferase from Thermococcus onnurineus (strain NA1).